The following is a 270-amino-acid chain: Putative pyruvate, phosphate dikinase regulatory protein 2 (270 aa).

151-158 (GVSRTSKT) is a binding site for ADP.

The protein belongs to the pyruvate, phosphate/water dikinase regulatory protein family. PDRP subfamily.

It catalyses the reaction N(tele)-phospho-L-histidyl/L-threonyl-[pyruvate, phosphate dikinase] + ADP = N(tele)-phospho-L-histidyl/O-phospho-L-threonyl-[pyruvate, phosphate dikinase] + AMP + H(+). It carries out the reaction N(tele)-phospho-L-histidyl/O-phospho-L-threonyl-[pyruvate, phosphate dikinase] + phosphate + H(+) = N(tele)-phospho-L-histidyl/L-threonyl-[pyruvate, phosphate dikinase] + diphosphate. Its function is as follows. Bifunctional serine/threonine kinase and phosphorylase involved in the regulation of the pyruvate, phosphate dikinase (PPDK) by catalyzing its phosphorylation/dephosphorylation. This is Putative pyruvate, phosphate dikinase regulatory protein 2 from Listeria monocytogenes serovar 1/2a (strain ATCC BAA-679 / EGD-e).